The following is a 204-amino-acid chain: Imidazoleglycerol-phosphate dehydratase (204 aa).

Residues 183 to 204 (DPRMDGITPSTKGTLSESGDSQ) are disordered. The span at 190-204 (TPSTKGTLSESGDSQ) shows a compositional bias: polar residues.

This sequence belongs to the imidazoleglycerol-phosphate dehydratase family.

The protein resides in the cytoplasm. The catalysed reaction is D-erythro-1-(imidazol-4-yl)glycerol 3-phosphate = 3-(imidazol-4-yl)-2-oxopropyl phosphate + H2O. It participates in amino-acid biosynthesis; L-histidine biosynthesis; L-histidine from 5-phospho-alpha-D-ribose 1-diphosphate: step 6/9. This chain is Imidazoleglycerol-phosphate dehydratase, found in Alcanivorax borkumensis (strain ATCC 700651 / DSM 11573 / NCIMB 13689 / SK2).